The primary structure comprises 248 residues: Murein peptide amidase A (248 aa).

The 243-residue stretch at 3–245 (RYYSNNQEIT…DAFIALLQHD (243 aa)) folds into the Peptidase M14 domain. Positions 60, 63, and 168 each coordinate Zn(2+). Glu-221 serves as the catalytic Proton donor/acceptor.

Belongs to the peptidase M14 family. In terms of assembly, homodimer. Requires Zn(2+) as cofactor.

It is found in the cytoplasm. The catalysed reaction is L-alanyl-gamma-D-glutamyl-meso-2,6-diaminopimelate + H2O = L-alanyl-D-glutamate + meso-2,6-diaminopimelate. Its pathway is cell wall degradation; peptidoglycan degradation. Its function is as follows. Involved in muropeptide degradation. Catalyzes the hydrolysis of the gamma-D-glutamyl-diaminopimelic acid (gamma-D-Glu-Dap) amide bond in the murein tripeptide L-alanyl-gamma-D-glutamyl-meso-diaminopimelic acid, leading to the formation of L-Ala-gamma-D-Glu and Dap. Has weak activity with L-Ala-gamma-D-Glu-L-Lys, MurNAc-tripeptide and gamma-D-Glu-meso-Dap. Cannot hydrolyze murein tetrapeptide. The chain is Murein peptide amidase A from Vibrio campbellii (strain ATCC BAA-1116).